The chain runs to 179 residues: Large ribosomal subunit protein uL10 (179 aa).

The protein belongs to the universal ribosomal protein uL10 family. Part of the ribosomal stalk of the 50S ribosomal subunit. The N-terminus interacts with L11 and the large rRNA to form the base of the stalk. The C-terminus forms an elongated spine to which L12 dimers bind in a sequential fashion forming a multimeric L10(L12)X complex.

Its function is as follows. Forms part of the ribosomal stalk, playing a central role in the interaction of the ribosome with GTP-bound translation factors. In Mycolicibacterium gilvum (strain PYR-GCK) (Mycobacterium gilvum (strain PYR-GCK)), this protein is Large ribosomal subunit protein uL10.